We begin with the raw amino-acid sequence, 365 residues long: DNA repair protein rhp51 (365 aa).

Residues Met1–Ser25 form a disordered region. Polar residues predominate over residues Ala12–Ser25. Gly149–Ser156 is a binding site for ATP.

The protein belongs to the RecA family. RAD51 subfamily. Interacts with rad22, rad54, rdh54, rhp54, rti1, swi2 and swi5. Forms homooiligomers.

It localises to the nucleus. Functionally, required both for recombination and for the repair of DNA damage caused by X-rays. Binds to single and double-stranded DNA, in the presence of magnesium, and exhibits DNA-dependent ATPase activity. Promotes DNA strand annealing and strand exchange via DNA recombinase activity and forms helical nucleoprotein filaments. This Schizosaccharomyces pombe (strain 972 / ATCC 24843) (Fission yeast) protein is DNA repair protein rhp51 (rhp51).